The primary structure comprises 115 residues: MAVTQEEIIAGIAEIIEEVTGIEPSEITPEKSFVDDLDIDSLSMVEIAVQTEDKYGVKIPDEDLAGLRTVGDVVTYIQKLEEENPEAAEALRAKIVSENPEAAANVQARLETESK.

The region spanning 3–81 is the Carrier domain; that stretch reads VTQEEIIAGI…DVVTYIQKLE (79 aa). Ser41 bears the O-(pantetheine 4'-phosphoryl)serine mark.

Belongs to the acyl carrier protein (ACP) family. Post-translationally, 4'-phosphopantetheine is transferred from CoA to a specific serine of apo-AcpM.

The protein localises to the cytoplasm. In terms of biological role, acyl carrier protein involved in meromycolate extension. In Mycobacterium leprae (strain TN), this protein is Meromycolate extension acyl carrier protein (acpM).